The following is a 300-amino-acid chain: MPSKKSSSPLSVEKLHRSEPLELNGATLFEGDALSVLRRLPSGSVRCIVTSPPYWGLRDYGIDEQIGLESSMTQFLNRLVTIFSEAKRVLTDDGTLWVNIGDGYTSGNRGYRAPDKKNPARAMAVRPDTPEGLKPKDLIGIPWRLAFALQEDGWYLRSDIVWNKPNAMPESVKDRPTRSHEFLFMLTKSEKYYYDWEAVREEKDSGGFRNRRTVWNVNTKPFAGAHFATFPTELIRPCILASTKPGDYVLDPFFGSGTVGVVCQQEDRQYVGIELNPEYVDIAVNRLQGEDTNVIRIAAA.

A disordered region spans residues 109–129 (RGYRAPDKKNPARAMAVRPDT).

It belongs to the N(4)/N(6)-methyltransferase family. N(4) subfamily.

It carries out the reaction a 2'-deoxycytidine in DNA + S-adenosyl-L-methionine = an N(4)-methyl-2'-deoxycytidine in DNA + S-adenosyl-L-homocysteine + H(+). In terms of biological role, a beta subtype methylase, recognizes the double-stranded sequence 5'-CCCGGG-3', methylates C-2 on both strands, and protects the DNA from cleavage by the Cfr9I endonuclease. This is Type II methyltransferase M.Cfr9I from Citrobacter freundii.